A 466-amino-acid chain; its full sequence is Argininosuccinate lyase (466 aa).

This sequence belongs to the lyase 1 family. Argininosuccinate lyase subfamily.

The protein localises to the cytoplasm. It catalyses the reaction 2-(N(omega)-L-arginino)succinate = fumarate + L-arginine. Its pathway is amino-acid biosynthesis; L-arginine biosynthesis; L-arginine from L-ornithine and carbamoyl phosphate: step 3/3. This Brucella anthropi (strain ATCC 49188 / DSM 6882 / CCUG 24695 / JCM 21032 / LMG 3331 / NBRC 15819 / NCTC 12168 / Alc 37) (Ochrobactrum anthropi) protein is Argininosuccinate lyase.